An 82-amino-acid polypeptide reads, in one-letter code: MDKHFVYIVKCNDGSLYTGYAKDVNARVIKHNNGKGAKYTKIRRPVELVYQETYTTKSEALKREYEIKTYTRQQKLKMIQEG.

The 76-residue stretch at 2-77 (DKHFVYIVKC…KTYTRQQKLK (76 aa)) folds into the GIY-YIG domain.

Belongs to the UPF0213 family.

The protein is UPF0213 protein SERP0126 of Staphylococcus epidermidis (strain ATCC 35984 / DSM 28319 / BCRC 17069 / CCUG 31568 / BM 3577 / RP62A).